The following is a 303-amino-acid chain: Recombination-associated protein RdgC (303 aa).

Belongs to the RdgC family.

The protein resides in the cytoplasm. The protein localises to the nucleoid. Its function is as follows. May be involved in recombination. This Enterobacter sp. (strain 638) protein is Recombination-associated protein RdgC.